The primary structure comprises 245 residues: Derlin-1 (245 aa).

At 1-17 (MDAGVWYRSLPRFTRYW) the chain is on the cytoplasmic side. A helical transmembrane segment spans residues 18-38 (LTATVVLSMLCRFDVIPLHWL). Over 39–58 (HLDRSAVFSKLQLWRCMTSL) the chain is Lumenal. The chain crosses the membrane as a helical span at residues 59–79 (FVFPISSNTAFHFLINCFFIV). The Cytoplasmic segment spans residues 80 to 99 (QYSSKLEKDQYSRSPADYLY). The helical transmembrane segment at 100-120 (LLIVSAVLANIGGMIFNVYFL) threads the bilayer. Topologically, residues 121 to 156 (MDTLVLAITYIWCQLNKDVTVSFWFGTRFKAMYLPW) are lumenal. A helical membrane pass occupies residues 157–177 (VLAAFEFIFHFSLASLVGIFV). At 178–245 (GHVYYFFKFQ…WGRGMTLGRN (68 aa)) the chain is on the cytoplasmic side. The interval 218-245 (FGLPPESRAPPRQATESPWGRGMTLGRN) is disordered.

The protein belongs to the derlin family.

Its subcellular location is the endoplasmic reticulum membrane. May be involved in the degradation process of specific misfolded endoplasmic reticulum (ER) luminal proteins. May also involved in endoplasmic reticulum stress-induced pre-emptive quality control, a mechanism that selectively attenuates the translocation of newly synthesized proteins into the endoplasmic reticulum and reroutes them to the cytosol for proteasomal degradation. This Drosophila melanogaster (Fruit fly) protein is Derlin-1.